Reading from the N-terminus, the 311-residue chain is 3-dehydro-scyllo-inosose hydrolase (311 aa).

Positions 35, 37, 46, 117, and 173 each coordinate Zn(2+).

The protein belongs to the creatininase superfamily. Homotrimer. Requires Zn(2+) as cofactor.

It carries out the reaction 3-dehydro-scyllo-inosose + H2O = 5-dehydro-L-gluconate + H(+). Its pathway is polyol metabolism; myo-inositol metabolism. Catalyzes the ring-opening hydrolysis of 3-dehydro-scyllo-inosose (diketo-inositol) to 5-dehydro-L-gluconate, and thus probably functions in a myo-inositol degradation pathway together with IolG, IolM and IolO. The chain is 3-dehydro-scyllo-inosose hydrolase from Thermotoga maritima (strain ATCC 43589 / DSM 3109 / JCM 10099 / NBRC 100826 / MSB8).